The following is a 767-amino-acid chain: Integrin beta-8 (767 aa).

The signal sequence occupies residues 1–21; it reads MCGSALAFLTAALLSLHNCQR. At 22-681 the chain is on the extracellular side; it reads GPALVLGAAW…SECLSGPSYL (660 aa). The PSI domain maps to 46–95; that stretch reads RCGSANVVSCARCLQLGPECGWCVQEDFVSGGSGSERCDTVSSLISKGCP. 25 cysteine pairs are disulfide-bonded: C47–C65, C55–C469, C58–C83, C68–C94, C211–C218, C266–C307, C407–C419, C439–C467, C471–C490, C471–C493, C481–C493, C498–C527, C510–C525, C519–C530, C532–C545, C552–C566, C560–C571, C573–C582, C584–C608, C592–C606, C600–C611, C613–C623, C626–C629, C633–C660, and C639–C656. Positions 146 to 384 constitute a VWFA domain; that stretch reads PVDLYYLVDV…NLVVEAYKKI (239 aa). 2 residues coordinate Mg(2+): D154 and S156. D193 contacts Ca(2+). A glycan (N-linked (GlcNAc...) asparagine) is linked at N233. 4 residues coordinate Ca(2+): N249, D251, P253, and E254. E254 is a binding site for Mg(2+). The N-linked (GlcNAc...) asparagine glycan is linked to N402. 3 N-linked (GlcNAc...) asparagine glycosylation sites follow: N421, N431, and N456. I-EGF domains are found at residues 471–494, 498–546, 547–583, and 584–624; these read CENH…PQCD, CHFD…QYCE, KDDF…DRCQ, and CPSA…RLCE. An N-linked (GlcNAc...) asparagine glycan is attached at N647. Residues 682–702 form a helical membrane-spanning segment; sequence RIFFIIFIVTFLIGLLKVLII. The Cytoplasmic segment spans residues 703–767; it reads RQVILQWNNN…NAQEAFRCNF (65 aa).

It belongs to the integrin beta chain family. Heterodimer of an alpha and a beta subunit. Beta-8 (ITGB8) associates with alpha-V (ITGAV) to form ITGAV:ITGB8. ITGAV:ITGB8 interacts with TGFB1.

Its subcellular location is the cell membrane. In terms of biological role, integrin alpha-V:beta-8 (ITGAV:ITGB8) is a receptor for fibronectin. It recognizes the sequence R-G-D in its ligands. Integrin alpha-V:beta-6 (ITGAV:ITGB6) mediates R-G-D-dependent release of transforming growth factor beta-1 (TGF-beta-1) from regulatory Latency-associated peptide (LAP), thereby playing a key role in TGF-beta-1 activation on the surface of activated regulatory T-cells (Tregs). Required during vasculogenesis. The chain is Integrin beta-8 from Mus musculus (Mouse).